Reading from the N-terminus, the 428-residue chain is Adenylosuccinate synthetase 1 (428 aa).

GTP is bound by residues 12 to 18 (GDEGKGK) and 40 to 42 (GHT). The active-site Proton acceptor is Asp-13. Mg(2+) is bound by residues Asp-13 and Gly-40. Residues 13-16 (DEGK), 38-41 (NAGH), Thr-133, Arg-147, Asn-224, Thr-239, and Arg-303 contribute to the IMP site. The Proton donor role is filled by His-41. Position 299 to 305 (299 to 305 (TTTGRRR)) interacts with substrate. GTP is bound by residues Arg-305, 331 to 333 (KLD), and 413 to 415 (GVG).

Belongs to the adenylosuccinate synthetase family. In terms of assembly, homodimer. Requires Mg(2+) as cofactor.

The protein localises to the cytoplasm. The catalysed reaction is IMP + L-aspartate + GTP = N(6)-(1,2-dicarboxyethyl)-AMP + GDP + phosphate + 2 H(+). The protein operates within purine metabolism; AMP biosynthesis via de novo pathway; AMP from IMP: step 1/2. In terms of biological role, plays an important role in the de novo pathway and in the salvage pathway of purine nucleotide biosynthesis. Catalyzes the first committed step in the biosynthesis of AMP from IMP. This chain is Adenylosuccinate synthetase 1, found in Laccaria bicolor (strain S238N-H82 / ATCC MYA-4686) (Bicoloured deceiver).